Consider the following 151-residue polypeptide: Apolipoprotein A-I (151 aa).

An N-terminal signal peptide occupies residues 1–18 (MKAVVLTLAVLFLTGSQA). Positions 19-24 (RHFWQQ) are excised as a propeptide. 2 repeat units span residues 67 to 88 (LKLLDNWDTLGSTITKLREQIG) and 89 to 110 (PVTQEFWDNLEKETEVLRQEMS). Residues 67 to 143 (LKLLDNWDTL…EVELYRQKVA (77 aa)) form a 4 X approximate tandem repeats region. Position 109 is a methionine sulfoxide (Met-109). The stretch at 111 to 121 (KDLEEVKQKVQ) is one 3; half-length repeat. Repeat unit 4 spans residues 122-143 (PYLDDFQKKWQEEVELYRQKVA).

It belongs to the apolipoprotein A1/A4/E family. In terms of assembly, homodimer. Interacts with APOA1BP and CLU. Component of a sperm activating protein complex (SPAP), consisting of APOA1, an immunoglobulin heavy chain, an immunoglobulin light chain and albumin. Interacts with NDRG1. Interacts with SCGB3A2. Interacts with NAXE and YJEFN3. In terms of processing, glycosylated. Post-translationally, palmitoylated. Phosphorylation sites are present in the extracellular medium. As to expression, major protein of plasma HDL, also found in chylomicrons.

It localises to the secreted. In terms of biological role, participates in the reverse transport of cholesterol from tissues to the liver for excretion by promoting cholesterol efflux from tissues and by acting as a cofactor for the lecithin cholesterol acyltransferase (LCAT). As part of the SPAP complex, activates spermatozoa motility. The sequence is that of Apolipoprotein A-I (APOA1) from Panthera tigris altaica (Siberian tiger).